The sequence spans 150 residues: Histone H2A.1 (150 aa).

M1 bears the N-acetylmethionine mark. Composition is skewed to basic residues over residues 1–24 (MDAS…KKSV) and 141–150 (SKAKKSPKKA). Disordered stretches follow at residues 1–26 (MDAS…SVTR) and 128–150 (RKEN…PKKA). 2 short sequence motifs (SPKK motif) span residues 139–142 (SPSK) and 146–149 (SPKK).

It belongs to the histone H2A family. As to quaternary structure, the nucleosome is a histone octamer containing two molecules each of H2A, H2B, H3 and H4 assembled in one H3-H4 heterotetramer and two H2A-H2B heterodimers. The octamer wraps approximately 147 bp of DNA. In terms of tissue distribution, high expression in root meristematic tissues, moderate in whole shoot and very low in mature leaves.

Its subcellular location is the nucleus. The protein localises to the chromosome. Core component of nucleosome. Nucleosomes wrap and compact DNA into chromatin, limiting DNA accessibility to the cellular machineries which require DNA as a template. Histones thereby play a central role in transcription regulation, DNA repair, DNA replication and chromosomal stability. DNA accessibility is regulated via a complex set of post-translational modifications of histones, also called histone code, and nucleosome remodeling. This chain is Histone H2A.1, found in Pisum sativum (Garden pea).